We begin with the raw amino-acid sequence, 469 residues long: tRNA-2-methylthio-N(6)-dimethylallyladenosine synthase (469 aa).

Positions 22-142 (RKVFIKTYGC…LPEALRRAQQ (121 aa)) constitute an MTTase N-terminal domain. [4Fe-4S] cluster is bound by residues C31, C67, C105, C183, C187, and C190. A Radical SAM core domain is found at 169 to 401 (RARGVTAFLT…QALLLKQQQE (233 aa)). The 63-residue stretch at 404–466 (ESCIGKEIDL…TNSLFAERAE (63 aa)) folds into the TRAM domain.

The protein belongs to the methylthiotransferase family. MiaB subfamily. Monomer. [4Fe-4S] cluster is required as a cofactor.

It localises to the cytoplasm. The catalysed reaction is N(6)-dimethylallyladenosine(37) in tRNA + (sulfur carrier)-SH + AH2 + 2 S-adenosyl-L-methionine = 2-methylsulfanyl-N(6)-dimethylallyladenosine(37) in tRNA + (sulfur carrier)-H + 5'-deoxyadenosine + L-methionine + A + S-adenosyl-L-homocysteine + 2 H(+). In terms of biological role, catalyzes the methylthiolation of N6-(dimethylallyl)adenosine (i(6)A), leading to the formation of 2-methylthio-N6-(dimethylallyl)adenosine (ms(2)i(6)A) at position 37 in tRNAs that read codons beginning with uridine. The polypeptide is tRNA-2-methylthio-N(6)-dimethylallyladenosine synthase (Rhizobium etli (strain CIAT 652)).